A 329-amino-acid chain; its full sequence is Ethylene-responsive transcription factor ERF117 (329 aa).

Disordered regions lie at residues 25–51 (DATD…KPPK) and 71–90 (NSTG…FKGV). Over residues 71 to 86 (NSTGNKAAGNRKTSSG) the composition is skewed to polar residues. A DNA-binding region (AP2/ERF) is located at residues 86–143 (GFKGVRRRPWGKFAAEIRNPFEKKRKWLGTFPTEEEAAEAYQKSKREFDERLGLVKQE).

It belongs to the AP2/ERF transcription factor family. ERF subfamily.

It is found in the nucleus. Its function is as follows. Probably acts as a transcriptional activator. Binds to the GCC-box pathogenesis-related promoter element. May be involved in the regulation of gene expression by stress factors and by components of stress signal transduction pathways. This is Ethylene-responsive transcription factor ERF117 (ERF117) from Arabidopsis thaliana (Mouse-ear cress).